We begin with the raw amino-acid sequence, 391 residues long: MDQFIKQDETGDLIETGMNVANHFLSAPIQGTNSLSKATIIPGVAPVLIGNPEQKNIQYPTTSHQGSKSKGRGSGARPIIVSSSEGGTGGTQVPEPLFAQTGQGGIVTTVYQDPTIQPTGSYRSVELAKIGKERMINRFVEKPRTSTPVTEFKRGGPGAAAQGQTIQEEGIDGNGASAGSKERSGSLSGATPYAHLSLPQQDSTPANVGIAPQSAISANEIMDLLRGMDARLQHLEQKVDKVLAQGSMVTQIKNELSTVKTTLATIEGMMATVKIMDPGNPTGVPVDELRRSFSDHVTIVSGPGDVSFSSGEEPTLYLDELARPVPKPRPAKQPKPQPVKDLAGRKVMITKMITDCVANPQMKQVFEQRLAKASTEDALNDIKRDIIRSAI.

Phosphothreonine is present on residues T10, T16, and T39. Positions 55-65 are enriched in polar residues; the sequence is KNIQYPTTSHQ. A disordered region spans residues 55-90; that stretch reads KNIQYPTTSHQGSKSKGRGSGARPIIVSSSEGGTGG. Position 69 is a phosphoserine (S69). Phosphothreonine occurs at positions 91, 150, and 165. The segment at 145 to 208 is disordered; sequence TSTPVTEFKR…PQQDSTPANV (64 aa). Position 188 is a phosphoserine (S188). The segment at 216–279 is multimerization; the sequence is ISANEIMDLL…MATVKIMDPG (64 aa). Positions 218-245 form a coiled coil; that stretch reads ANEIMDLLRGMDARLQHLEQKVDKVLAQ. The residue at position 250 (T250) is a Phosphothreonine. Position 257 is a phosphoserine (S257). Residues T258 and T282 each carry the phosphothreonine modification. S292 and S294 each carry phosphoserine. The residue at position 298 (T298) is a Phosphothreonine. S301 and S374 each carry phosphoserine. The segment at 343–391 is interaction with the nucleoprotein; that stretch reads AGRKVMITKMITDCVANPQMKQVFEQRLAKASTEDALNDIKRDIIRSAI. Phosphothreonine is present on T375.

It belongs to the rubulavirus/avulavirus P protein family. Homotetramer. Interacts (via multimerization domain) with polymerase L; this interaction forms the polymerase L-P complex. Interacts (via N-terminus) with N0 (via Ncore); this interaction allows P to chaperon N0 to avoid N polymerization before encapsidation. Interacts (via C-terminus) with N-RNA template; this interaction positions the polymerase on the template for both transcription and replication. Interacts with host RPS6KB1 kinase; this interaction may play a role in the viral replication and transcription.

Essential cofactor of the RNA polymerase L that plays a central role in the transcription and replication by forming the polymerase complex with RNA polymerase L and recruiting L to the genomic N-RNA template for RNA synthesis. Also plays a central role in the encapsidation of nascent RNA chains by forming the encapsidation complex with the nucleocapsid protein N (N-P complex). Acts as a chaperone for newly synthesized free N protein, so-called N0, allowing encapsidation of nascent RNA chains during replication. The nucleoprotein protein N prevents excessive phosphorylation of P, which leads to down-regulation of viral transcription/ replication. Participates, together with N, in the formation of viral factories (viroplasms), which are large inclusions in the host cytoplasm where replication takes place. This Mumps virus genotype B (strain Miyahara vaccine) (MuV) protein is Phosphoprotein.